The primary structure comprises 268 residues: Phosphatidylglycerol--prolipoprotein diacylglyceryl transferase (268 aa).

Helical transmembrane passes span 16-36 (FITL…GIWL), 56-76 (IWLV…FNWG), and 92-112 (GIAI…FTYV). Arg-136 serves as a coordination point for a 1,2-diacyl-sn-glycero-3-phospho-(1'-sn-glycerol). 3 helical membrane-spanning segments follow: residues 175–195 (PTFL…LWLF), 204–224 (GTLL…IEGL), and 236–256 (IAQV…FRLY).

The protein belongs to the Lgt family.

The protein resides in the cell inner membrane. The enzyme catalyses L-cysteinyl-[prolipoprotein] + a 1,2-diacyl-sn-glycero-3-phospho-(1'-sn-glycerol) = an S-1,2-diacyl-sn-glyceryl-L-cysteinyl-[prolipoprotein] + sn-glycerol 1-phosphate + H(+). It functions in the pathway protein modification; lipoprotein biosynthesis (diacylglyceryl transfer). Its function is as follows. Catalyzes the transfer of the diacylglyceryl group from phosphatidylglycerol to the sulfhydryl group of the N-terminal cysteine of a prolipoprotein, the first step in the formation of mature lipoproteins. In Thermosynechococcus vestitus (strain NIES-2133 / IAM M-273 / BP-1), this protein is Phosphatidylglycerol--prolipoprotein diacylglyceryl transferase.